Here is a 462-residue protein sequence, read N- to C-terminus: Cysteine--tRNA ligase (462 aa).

Residue Cys-30 participates in Zn(2+) binding. The short motif at 32 to 42 (MTVYDYCHVGH) is the 'HIGH' region element. Cys-214, His-239, and Glu-243 together coordinate Zn(2+). The 'KMSKS' region motif lies at 271-275 (KMSKS). ATP is bound at residue Lys-274.

This sequence belongs to the class-I aminoacyl-tRNA synthetase family. In terms of assembly, monomer. The cofactor is Zn(2+).

Its subcellular location is the cytoplasm. The enzyme catalyses tRNA(Cys) + L-cysteine + ATP = L-cysteinyl-tRNA(Cys) + AMP + diphosphate. This Cupriavidus necator (strain ATCC 17699 / DSM 428 / KCTC 22496 / NCIMB 10442 / H16 / Stanier 337) (Ralstonia eutropha) protein is Cysteine--tRNA ligase.